A 1881-amino-acid chain; its full sequence is Kinesin-like protein KIF26A (1881 aa).

3 disordered regions span residues 20-66 (PARE…AGGG), 145-193 (PASH…PPGP), and 309-330 (ASKRKKHHPPPAPSTRGTSTYP). Residue S30 is modified to Phosphoserine. The 355-residue stretch at 364-718 (KVKVMLRIWP…VQLAARIHRL (355 aa)) folds into the Kinesin motor domain. 462-469 (GHMSLGKS) lines the ATP pocket. Disordered stretches follow at residues 718-778 (LRRK…SSEQ), 794-827 (SDRELTDNEGPPDFVPIIPALSRRRPSEGPRDAD), 846-982 (GSEA…QAAL), 1078-1104 (YTSQMSEGPGDPGEFPEGTAWAGGSPA), 1118-1266 (LSES…PRLP), 1328-1425 (SGSL…PYRP), 1442-1633 (SKVR…SGEL), and 1652-1698 (YESM…TGLQ). Basic residues predominate over residues 742–751 (RRPPHLRPFH). Positions 818–827 (RPSEGPRDAD) are enriched in basic and acidic residues. Residues 905–915 (SDPSKTGTQSE) show a composition bias toward polar residues. Residues 940–950 (LPSPAPPPPRQ) show a composition bias toward pro residues. A compositionally biased stretch (low complexity) spans 1084-1095 (EGPGDPGEFPEG). Over residues 1151–1162 (EESKVRSSECGR) the composition is skewed to basic and acidic residues. S1257 carries the post-translational modification Phosphoserine. The segment covering 1328-1353 (SGSLKTTSGSKKSVSPKGAFFPRPSG) has biased composition (low complexity). The span at 1366–1378 (LEQSTALTPTQAL) shows a compositional bias: polar residues. A compositionally biased stretch (basic and acidic residues) spans 1390 to 1399 (RGEEEARPSG). A compositionally biased stretch (polar residues) spans 1400–1412 (RSDSSVPKATSSL). Low complexity-rich tracts occupy residues 1477-1489 (PAKGVGATKPPAG), 1524-1537 (PGPRAAPRAVPGIG), and 1575-1587 (WGSTDSDSGNDSG). Positions 1616 to 1629 (RYSSGHGSDNSSVL) are enriched in polar residues. S1654 is subject to Phosphoserine. Positions 1664-1675 (SASSAPDSMSES) are enriched in low complexity. Over residues 1685 to 1698 (RSLKSPKKRATGLQ) the composition is skewed to basic residues. Positions 1780–1812 (LRLAERRQQRLQEVQAKRDHLCEELAETQGRLM) form a coiled coil.

It belongs to the TRAFAC class myosin-kinesin ATPase superfamily. Kinesin family. KIF26 subfamily. Interacts with GRB2 (via SH2 domain). In terms of tissue distribution, expressed in several neuronal populations.

It localises to the cytoplasm. The protein localises to the cytoskeleton. In terms of biological role, atypical kinesin that plays a key role in enteric neuron development. Acts by repressing a cell growth signaling pathway in the enteric nervous system development, possibly via its interaction with GRB2 that prevents GRB2-binding to SHC, thereby attenating the GDNF-Ret signaling. Binds to microtubules but lacks microtubule-based motility due to the absence of ATPase activity. Plays a critical role in cerebral cortical development. It probably acts as a microtubule stabilizer that regulates neurite growth and radial migration of cortical excitatory neurons. The polypeptide is Kinesin-like protein KIF26A (Kif26a) (Mus musculus (Mouse)).